The following is a 366-amino-acid chain: MKAIIVKPPNAGVQVKDVDEKKLDSYGKIKIRTIYNGICGTDREIVNGKLTLSTLPKGKDFLVLGHEAIGVVEESYHGFSQGDLVMPVNRRGCGICRNCLVGRPDFCETGEFGEAGIHKMDGFMREWWYDDPKYLVKIPKSIEDIGILAQPLADIEKSIEEILEVQKRVPVWTCDDGTLNCRKVLVVGTGPIGVLFTLLFRTYGLEVWMANRREPTEVEQTVIEETKTNYYNSSNGYDKLKDSVGKFDVIIDATGADVNILGNVIPLLGRNGVLGLFGFSTSGSVPLDYKTLQEIVHTNKTIIGLVNGQKPHFQQAVVHLASWKTLYPKAAKMLITKTVSINDEKELLKVLREKEHGEIKIRILWE.

Cys39 is a binding site for Zn(2+). Thr41 contributes to the substrate binding site. His66 and Glu67 together coordinate Zn(2+). Asn89 serves as a coordination point for substrate. Residues Cys93, Cys96, Cys99, and Cys107 each coordinate Zn(2+). Substrate-binding residues include Glu114, Gln150, and Asp154. Gln150 serves as a coordination point for Zn(2+). Residues 189–192 (TGPI), 211–213 (NRR), 277–279 (FGF), 305–307 (LVN), and Lys354 contribute to the NADP(+) site. Asn307 serves as a coordination point for substrate.

This sequence belongs to the zinc-containing alcohol dehydrogenase family. Glucose 1-dehydrogenase subfamily. As to quaternary structure, homotetramer. Zn(2+) serves as cofactor.

It carries out the reaction D-glucose + NAD(+) = D-glucono-1,5-lactone + NADH + H(+). It catalyses the reaction D-glucose + NADP(+) = D-glucono-1,5-lactone + NADPH + H(+). The catalysed reaction is D-galactose + NAD(+) = D-galactono-1,4-lactone + NADH + H(+). The enzyme catalyses D-galactose + NADP(+) = D-galactono-1,5-lactone + NADPH + H(+). It carries out the reaction an aldopyranose + NAD(+) = aldono-1,5-lactone + NADH + H(+). It catalyses the reaction an aldopyranose + NADP(+) = aldono-1,5-lactone + NADPH + H(+). Inhibited by EDTA in vitro. Functionally, catalyzes the NAD(P)(+)-dependent oxidation of D-glucose to D-gluconate via gluconolactone. Displays broad substrate specificity since it is able to catalyze the oxidation of a number of alternative aldose sugars, such as D-galactose, D-xylose and L-arabinose, to the corresponding glyconate. Can utilize both NAD(+) and NADP(+) as electron acceptor. Physiologically, seems to be involved in the degradation of both glucose and galactose through a non-phosphorylative variant of the Entner-Doudoroff pathway. The protein is Glucose 1-dehydrogenase of Saccharolobus solfataricus (Sulfolobus solfataricus).